Here is a 309-residue protein sequence, read N- to C-terminus: Mitogen-activated protein kinase kinase 8 (309 aa).

Positions 53 to 305 (LDRISVLGSG…ASQLLNHPFL (253 aa)) constitute a Protein kinase domain. Residues 59-67 (LGSGNGGTV) and Lys-82 contribute to the ATP site. The Proton acceptor role is filled by Asp-167. A phosphoserine mark is found at Ser-195 and Ser-201. The residue at position 205 (Thr-205) is a Phosphothreonine.

Belongs to the protein kinase superfamily. STE Ser/Thr protein kinase family. MAP kinase kinase subfamily. Phosphorylation at Ser-195 and Ser-201 by MAP kinase kinase kinases positively regulates kinase activity.

The enzyme catalyses L-seryl-[protein] + ATP = O-phospho-L-seryl-[protein] + ADP + H(+). It catalyses the reaction L-threonyl-[protein] + ATP = O-phospho-L-threonyl-[protein] + ADP + H(+). The catalysed reaction is L-tyrosyl-[protein] + ATP = O-phospho-L-tyrosyl-[protein] + ADP + H(+). The polypeptide is Mitogen-activated protein kinase kinase 8 (MKK8) (Arabidopsis thaliana (Mouse-ear cress)).